The following is a 65-amino-acid chain: Small ribosomal subunit protein bS21 (65 aa).

The segment covering 33–42 (RRREHYEKPS) has biased composition (basic and acidic residues). Residues 33-65 (RRREHYEKPSVKRKRKEAARLRKLQKMAREANN) are disordered. The segment covering 43–58 (VKRKRKEAARLRKLQK) has biased composition (basic residues).

This sequence belongs to the bacterial ribosomal protein bS21 family.

The protein is Small ribosomal subunit protein bS21 of Herpetosiphon aurantiacus (strain ATCC 23779 / DSM 785 / 114-95).